Reading from the N-terminus, the 170-residue chain is Peptide deformylase (170 aa).

The Fe cation site is built by C91 and H133. E134 is an active-site residue. H137 provides a ligand contact to Fe cation.

Belongs to the polypeptide deformylase family. The cofactor is Fe(2+).

It carries out the reaction N-terminal N-formyl-L-methionyl-[peptide] + H2O = N-terminal L-methionyl-[peptide] + formate. Removes the formyl group from the N-terminal Met of newly synthesized proteins. Requires at least a dipeptide for an efficient rate of reaction. N-terminal L-methionine is a prerequisite for activity but the enzyme has broad specificity at other positions. The chain is Peptide deformylase from Histophilus somni (strain 129Pt) (Haemophilus somnus).